A 466-amino-acid polypeptide reads, in one-letter code: CBL-interacting protein kinase 20 (466 aa).

Residues 12 to 276 form the Protein kinase domain; sequence YELGRSLGHG…IDELVKHPWF (265 aa). ATP is bound by residues 18 to 26 and K41; that span reads LGHGTFSKV. The active-site Proton acceptor is the D139. The activation loop stretch occupies residues 162-191; the sequence is DFGLSALSASRRHDGLLHTTCGTPSYVAPE. Positions 297–329 constitute an NAF domain; that stretch reads KPANAAMNMKPASLNAFDIISLSQGFDLSGMFC. Residues 337-366 are PPI; it reads TQDQLFVTGKPATAIVSRLEEIAETEHFTV. The segment at 446–466 is disordered; sequence ASEKNQLPAVSEVSPLSSPRN.

It belongs to the protein kinase superfamily. CAMK Ser/Thr protein kinase family. SNF1 subfamily. Mn(2+) serves as cofactor.

It carries out the reaction L-seryl-[protein] + ATP = O-phospho-L-seryl-[protein] + ADP + H(+). It catalyses the reaction L-threonyl-[protein] + ATP = O-phospho-L-threonyl-[protein] + ADP + H(+). In terms of biological role, CIPK serine-threonine protein kinases interact with CBL proteins. Binding of a CBL protein to the regulatory NAF domain of CIPK protein lead to the activation of the kinase in a calcium-dependent manner. The sequence is that of CBL-interacting protein kinase 20 (CIPK20) from Oryza sativa subsp. japonica (Rice).